Reading from the N-terminus, the 102-residue chain is Neuraminidase (102 aa).

Residues 1-6 are Intravirion-facing; the sequence is MNPNQK. The chain crosses the membrane as a helical; Signal-anchor for type II membrane protein span at residues 7-35; the sequence is IITIGSVSLGLVCLDILLHIISITITVLG. Residues 11–33 are involved in apical transport and lipid raft association; it reads GSVSLGLVCLDILLHIISITITV. The Virion surface segment spans residues 36–102; the sequence is LHKNGKQRRC…KGFALFSKDN (67 aa). Positions 37–88 are hypervariable stalk region; sequence HKNGKQRRCNETVIREDNETVRIEKVTQWHNTNVIEYIEKLEGDHFMNNTEP. Residues Asn-46, Asn-54, and Asn-84 are each glycosylated (N-linked (GlcNAc...) asparagine; by host). The segment at 89–102 is head of neuraminidase; it reads LCHAKGFALFSKDN.

The protein belongs to the glycosyl hydrolase 34 family. As to quaternary structure, homotetramer. It depends on Ca(2+) as a cofactor. In terms of processing, N-glycosylated.

It localises to the virion membrane. The protein localises to the host apical cell membrane. The catalysed reaction is Hydrolysis of alpha-(2-&gt;3)-, alpha-(2-&gt;6)-, alpha-(2-&gt;8)- glycosidic linkages of terminal sialic acid residues in oligosaccharides, glycoproteins, glycolipids, colominic acid and synthetic substrates.. Its activity is regulated as follows. Inhibited by the neuraminidase inhibitors zanamivir (Relenza) and oseltamivir (Tamiflu). These drugs interfere with the release of progeny virus from infected cells and are effective against all influenza strains. Resistance to neuraminidase inhibitors is quite rare. Functionally, catalyzes the removal of terminal sialic acid residues from viral and cellular glycoconjugates. Cleaves off the terminal sialic acids on the glycosylated HA during virus budding to facilitate virus release. Additionally helps virus spread through the circulation by further removing sialic acids from the cell surface. These cleavages prevent self-aggregation and ensure the efficient spread of the progeny virus from cell to cell. Otherwise, infection would be limited to one round of replication. Described as a receptor-destroying enzyme because it cleaves a terminal sialic acid from the cellular receptors. May facilitate viral invasion of the upper airways by cleaving the sialic acid moieties on the mucin of the airway epithelial cells. Likely to plays a role in the budding process through its association with lipid rafts during intracellular transport. May additionally display a raft-association independent effect on budding. Plays a role in the determination of host range restriction on replication and virulence. Sialidase activity in late endosome/lysosome traffic seems to enhance virus replication. The sequence is that of Neuraminidase (NA) from Influenza A virus (strain A/Black duck/Australia/702/1978 H3N8).